Here is a 244-residue protein sequence, read N- to C-terminus: tRNA pseudouridine synthase A (244 aa).

The active-site Nucleophile is the D52. Y110 contributes to the substrate binding site.

It belongs to the tRNA pseudouridine synthase TruA family. In terms of assembly, homodimer.

It catalyses the reaction uridine(38/39/40) in tRNA = pseudouridine(38/39/40) in tRNA. Formation of pseudouridine at positions 38, 39 and 40 in the anticodon stem and loop of transfer RNAs. The polypeptide is tRNA pseudouridine synthase A (Geotalea daltonii (strain DSM 22248 / JCM 15807 / FRC-32) (Geobacter daltonii)).